Here is a 342-residue protein sequence, read N- to C-terminus: Phosphoribosylformylglycinamidine cyclo-ligase (342 aa).

Belongs to the AIR synthase family.

The protein localises to the cytoplasm. The enzyme catalyses 2-formamido-N(1)-(5-O-phospho-beta-D-ribosyl)acetamidine + ATP = 5-amino-1-(5-phospho-beta-D-ribosyl)imidazole + ADP + phosphate + H(+). It participates in purine metabolism; IMP biosynthesis via de novo pathway; 5-amino-1-(5-phospho-D-ribosyl)imidazole from N(2)-formyl-N(1)-(5-phospho-D-ribosyl)glycinamide: step 2/2. The chain is Phosphoribosylformylglycinamidine cyclo-ligase from Gloeothece citriformis (strain PCC 7424) (Cyanothece sp. (strain PCC 7424)).